The primary structure comprises 177 residues: UPF0178 protein TP_0845 (177 aa).

Residues 155 to 177 (EAKTGEEQCDWPSAQGKSQTGRR) form a disordered region.

It belongs to the UPF0178 family.

This is UPF0178 protein TP_0845 from Treponema pallidum (strain Nichols).